A 104-amino-acid polypeptide reads, in one-letter code: MPDADLSILNRVYEIILDRKQNYDERSYVCKLLNHRKGMNKILEKVGEESIETILAVRNENHEEIVSESSDLIFHLLVMLAANNVTLDEIAAELSARHESMKRD.

The protein belongs to the PRA-PH family.

It localises to the cytoplasm. It carries out the reaction 1-(5-phospho-beta-D-ribosyl)-ATP + H2O = 1-(5-phospho-beta-D-ribosyl)-5'-AMP + diphosphate + H(+). Its pathway is amino-acid biosynthesis; L-histidine biosynthesis; L-histidine from 5-phospho-alpha-D-ribose 1-diphosphate: step 2/9. The chain is Phosphoribosyl-ATP pyrophosphatase from Methanosarcina barkeri (strain Fusaro / DSM 804).